We begin with the raw amino-acid sequence, 168 residues long: Microtubule-associated protein Jupiter (168 aa).

The span at 1–14 shows a compositional bias: polar residues; that stretch reads MISNFDCTDNQASS. Residues 1-33 are disordered; it reads MISNFDCTDNQASSKVLRPPGGGSSDIFGSEMP. Position 24 is a phosphoserine (serine 24). A Phosphothreonine modification is found at threonine 35. Positions 76–87 are enriched in basic and acidic residues; sequence RGQKTVDSHSRL. 2 disordered regions span residues 76–106 and 124–168; these read RGQK…KSSI and NGHY…GAGK. Threonine 92 and threonine 96 each carry phosphothreonine. Residues serine 105, serine 133, and serine 144 each carry the phosphoserine modification. Over residues 131-144 the composition is skewed to low complexity; it reads SGSVSSASSSVSSS. Over residues 145 to 155 the composition is skewed to polar residues; that stretch reads TENLKMNSGSR.

Belongs to the MAP Jupiter family.

It localises to the nucleus. The protein resides in the cytoplasm. Its subcellular location is the cytoskeleton. The protein localises to the spindle. Binds to all microtubule populations. This chain is Microtubule-associated protein Jupiter, found in Drosophila simulans (Fruit fly).